Reading from the N-terminus, the 388-residue chain is Bifunctional enzyme IspD/IspF (388 aa).

Positions 1–228 are 2-C-methyl-D-erythritol 4-phosphate cytidylyltransferase; it reads MRIAALLLAA…GVIDRNLLPR (228 aa). The segment at 228–388 is 2-C-methyl-D-erythritol 2,4-cyclodiphosphate synthase; the sequence is RVGLGYDVHA…SIMVPDNGEA (161 aa). Positions 234 and 236 each coordinate a divalent metal cation. 4-CDP-2-C-methyl-D-erythritol 2-phosphate is bound by residues 234–236 and 260–261; these read DVH and HS. Residue H268 coordinates a divalent metal cation. 4-CDP-2-C-methyl-D-erythritol 2-phosphate-binding positions include 282–284, 358–361, F365, and R368; these read DIG and TTSE.

This sequence in the N-terminal section; belongs to the IspD/TarI cytidylyltransferase family. IspD subfamily. The protein in the C-terminal section; belongs to the IspF family. A divalent metal cation serves as cofactor.

The catalysed reaction is 2-C-methyl-D-erythritol 4-phosphate + CTP + H(+) = 4-CDP-2-C-methyl-D-erythritol + diphosphate. It carries out the reaction 4-CDP-2-C-methyl-D-erythritol 2-phosphate = 2-C-methyl-D-erythritol 2,4-cyclic diphosphate + CMP. It participates in isoprenoid biosynthesis; isopentenyl diphosphate biosynthesis via DXP pathway; isopentenyl diphosphate from 1-deoxy-D-xylulose 5-phosphate: step 2/6. It functions in the pathway isoprenoid biosynthesis; isopentenyl diphosphate biosynthesis via DXP pathway; isopentenyl diphosphate from 1-deoxy-D-xylulose 5-phosphate: step 4/6. In terms of biological role, bifunctional enzyme that catalyzes the formation of 4-diphosphocytidyl-2-C-methyl-D-erythritol from CTP and 2-C-methyl-D-erythritol 4-phosphate (MEP) (IspD), and catalyzes the conversion of 4-diphosphocytidyl-2-C-methyl-D-erythritol 2-phosphate (CDP-ME2P) to 2-C-methyl-D-erythritol 2,4-cyclodiphosphate (ME-CPP) with a corresponding release of cytidine 5-monophosphate (CMP) (IspF). The polypeptide is Bifunctional enzyme IspD/IspF (Gluconobacter oxydans (strain 621H) (Gluconobacter suboxydans)).